A 415-amino-acid chain; its full sequence is Casein kinase I isoform delta (415 aa).

Residues 9-277 (YRLGRKIGSG…YLRQLFRNLF (269 aa)) enclose the Protein kinase domain. ATP-binding positions include 15–23 (IGSGSFGDI) and K38. D128 (proton acceptor) is an active-site residue. A compositionally biased stretch (basic and acidic residues) spans 301-315 (AEDAERERREREERL). The segment at 301-415 (AEDAERERRE…SSGLPSTVHR (115 aa)) is disordered. The segment at 317–342 (HTRNPAVRGLPSTASGRLRGTQEVTP) is autoinhibitory. Residues 341–352 (TPSTPLTPTSHT) are compositionally biased toward low complexity. The span at 380 to 415 (NVSSSDLTSRQDTSRMSTSQIPSRVTSSGLPSTVHR) shows a compositional bias: polar residues.

The protein belongs to the protein kinase superfamily. Monomer. Interacts with per1 and per2. Component of the circadian core oscillator. Post-translationally, autophosphorylated on serine and threonine residues. Detected in retina photoreceptor cells.

The protein resides in the cytoplasm. It localises to the nucleus. The enzyme catalyses L-seryl-[protein] + ATP = O-phospho-L-seryl-[protein] + ADP + H(+). It carries out the reaction L-threonyl-[protein] + ATP = O-phospho-L-threonyl-[protein] + ADP + H(+). It catalyses the reaction L-seryl-[tau protein] + ATP = O-phospho-L-seryl-[tau protein] + ADP + H(+). The catalysed reaction is L-threonyl-[tau protein] + ATP = O-phospho-L-threonyl-[tau protein] + ADP + H(+). Its activity is regulated as follows. Exhibits substrate-dependent heparin activation. In terms of biological role, casein kinases are operationally defined by their preferential utilization of acidic proteins such as caseins as substrates. Can phosphorylate a large number of proteins. Central component of the circadian clock. May act as a negative regulator of circadian rhythmicity by phosphorylating per1 and per2, which may lead to their degradation. Participates in wnt signaling. Has no kinase activity. The chain is Casein kinase I isoform delta (csnk1d) from Xenopus laevis (African clawed frog).